We begin with the raw amino-acid sequence, 86 residues long: Large ribosomal subunit protein bL27 (86 aa).

Residues 1-21 are disordered; it reads MAHHKGGGSSRNGKDSNPQYL.

This sequence belongs to the bacterial ribosomal protein bL27 family.

The protein is Large ribosomal subunit protein bL27 of Coprothermobacter proteolyticus (strain ATCC 35245 / DSM 5265 / OCM 4 / BT).